We begin with the raw amino-acid sequence, 834 residues long: DNA polymerase I, thermostable (834 aa).

A 5'-3' exonuclease domain is found at 176–262 (RPEQWVDFRA…DLPLEVDLAQ (87 aa)). Residues 412-834 (ERLHRNLLKR…MGEDWLSAKG (423 aa)) form a polymerase region.

Belongs to the DNA polymerase type-A family.

It carries out the reaction DNA(n) + a 2'-deoxyribonucleoside 5'-triphosphate = DNA(n+1) + diphosphate. In terms of biological role, in addition to polymerase activity, this DNA polymerase exhibits 5'-3' exonuclease activity. In Thermus thermophilus (strain ATCC 27634 / DSM 579 / HB8), this protein is DNA polymerase I, thermostable (polA).